A 178-amino-acid chain; its full sequence is Large ribosomal subunit protein uL6 (178 aa).

It belongs to the universal ribosomal protein uL6 family. Part of the 50S ribosomal subunit.

Functionally, this protein binds to the 23S rRNA, and is important in its secondary structure. It is located near the subunit interface in the base of the L7/L12 stalk, and near the tRNA binding site of the peptidyltransferase center. This chain is Large ribosomal subunit protein uL6, found in Staphylococcus epidermidis (strain ATCC 35984 / DSM 28319 / BCRC 17069 / CCUG 31568 / BM 3577 / RP62A).